A 479-amino-acid chain; its full sequence is Cysteine--tRNA ligase (479 aa).

C29 provides a ligand contact to Zn(2+). The 'HIGH' region signature appears at 31–41 (ATVQGAPHIGH). Positions 171-197 (QRVEDMQDAPDADPRGKRDPRDFALWK) are disordered. Basic and acidic residues predominate over residues 182–197 (ADPRGKRDPRDFALWK). Residues C224, H249, and E253 each contribute to the Zn(2+) site. The 'KMSKS' region motif lies at 280–284 (KMSKS). Residue K283 coordinates ATP.

This sequence belongs to the class-I aminoacyl-tRNA synthetase family. In terms of assembly, monomer. It depends on Zn(2+) as a cofactor.

It is found in the cytoplasm. It catalyses the reaction tRNA(Cys) + L-cysteine + ATP = L-cysteinyl-tRNA(Cys) + AMP + diphosphate. This Kocuria rhizophila (strain ATCC 9341 / DSM 348 / NBRC 103217 / DC2201) protein is Cysteine--tRNA ligase.